A 204-amino-acid chain; its full sequence is MSNFTVKVPLSERMADVLISKDRWKDDEEGYLKVKYGLEIILINVMKFAIVYGISLATGLLLQTVTVHMSYLWLRRYSFGLHATKTLNCTLISLAMFVLAPFVFQNIPSNNWIVLGTFAFILLNMFLFAPADTESLPLIGEKHRKTLKRKAMIGTLILTGIALLIPFAEMKTLIMVGSLFQVISINPLSYKLLKRRYRNYEKYE.

A run of 4 helical transmembrane segments spans residues 40–60, 87–107, 111–131, and 156–176; these read IILI…ATGL, LNCT…FQNI, NWIV…FAPA, and LILT…LIMV.

Belongs to the AgrB family.

Its subcellular location is the cell membrane. Its function is as follows. May be involved in the proteolytic processing of a quorum sensing system signal molecule precursor. The chain is Putative AgrB-like protein from Listeria welshimeri serovar 6b (strain ATCC 35897 / DSM 20650 / CCUG 15529 / CIP 8149 / NCTC 11857 / SLCC 5334 / V8).